We begin with the raw amino-acid sequence, 285 residues long: MEVVIVTGMSGAGKSASSHILEDLGYYTLDNMPPSLLLSFIDLTTKSKKKINKIACVVDIRGGEFFADLMKSITLLKNQSIDVKILYLDASDEILIRRYKEHRRPHPLAINGNISQGISNERELLSEVRNSADSIINTSNLTLGELRRKILYVFSLKDVDTKLAISVVSFGFKHGILLDADLVFDVRFLPNPYYIEELKKSSGLNTDIKDYVFGFDEANEFLDKLVDMVEFLIPKYSKEGKTNLVIGIGCTGGKHRSVAIAQALTARLEGNGEKVYVSHRDQKFW.

Position 8–15 (8–15) interacts with ATP; sequence GMSGAGKS. 59–62 is a GTP binding site; the sequence is DIRG.

The protein belongs to the RapZ-like family.

In terms of biological role, displays ATPase and GTPase activities. This is Nucleotide-binding protein FMG_1084 from Finegoldia magna (strain ATCC 29328 / DSM 20472 / WAL 2508) (Peptostreptococcus magnus).